Consider the following 152-residue polypeptide: Deoxyuridine 5'-triphosphate nucleotidohydrolase (152 aa).

Residues Arg-71 to Gly-73, Asn-84, Leu-88 to Asp-90, and Met-98 contribute to the substrate site.

Belongs to the dUTPase family. Requires Mg(2+) as cofactor.

The enzyme catalyses dUTP + H2O = dUMP + diphosphate + H(+). The protein operates within pyrimidine metabolism; dUMP biosynthesis; dUMP from dCTP (dUTP route): step 2/2. Its function is as follows. This enzyme is involved in nucleotide metabolism: it produces dUMP, the immediate precursor of thymidine nucleotides and it decreases the intracellular concentration of dUTP so that uracil cannot be incorporated into DNA. In Shewanella baltica (strain OS155 / ATCC BAA-1091), this protein is Deoxyuridine 5'-triphosphate nucleotidohydrolase.